The primary structure comprises 839 residues: Protein translocase subunit SecA (839 aa).

ATP contacts are provided by residues Q85, G103 to T107, and D492. The disordered stretch occupies residues E794–N820. Positions 823, 825, 834, and 835 each coordinate Zn(2+).

Belongs to the SecA family. As to quaternary structure, monomer and homodimer. Part of the essential Sec protein translocation apparatus which comprises SecA, SecYEG and auxiliary proteins SecDF. Other proteins may also be involved. The cofactor is Zn(2+).

The protein localises to the cell membrane. It localises to the cytoplasm. It carries out the reaction ATP + H2O + cellular proteinSide 1 = ADP + phosphate + cellular proteinSide 2.. Part of the Sec protein translocase complex. Interacts with the SecYEG preprotein conducting channel. Has a central role in coupling the hydrolysis of ATP to the transfer of proteins into and across the cell membrane, serving as an ATP-driven molecular motor driving the stepwise translocation of polypeptide chains across the membrane. The protein is Protein translocase subunit SecA of Clostridium acetobutylicum (strain ATCC 824 / DSM 792 / JCM 1419 / IAM 19013 / LMG 5710 / NBRC 13948 / NRRL B-527 / VKM B-1787 / 2291 / W).